The following is a 279-amino-acid chain: Small ribosomal subunit protein uS2 (279 aa).

The interval 232–279 (RRRGTDEKPEAGVASDEPLAEWERELLEEPKKSDEPKSDEQPAAAAAE) is disordered. Residues 252–271 (EWERELLEEPKKSDEPKSDE) are compositionally biased toward basic and acidic residues.

The protein belongs to the universal ribosomal protein uS2 family.

The protein is Small ribosomal subunit protein uS2 of Salinispora arenicola (strain CNS-205).